The sequence spans 202 residues: Small ribosomal subunit protein uS4c (202 aa).

In terms of domain architecture, S4 RNA-binding spans 90–158; that stretch reads MRLDNIIFRL…ITKNIELSQK (69 aa).

The protein belongs to the universal ribosomal protein uS4 family. In terms of assembly, part of the 30S ribosomal subunit. Contacts protein S5. The interaction surface between S4 and S5 is involved in control of translational fidelity.

The protein resides in the plastid. The protein localises to the chloroplast. Functionally, one of the primary rRNA binding proteins, it binds directly to 16S rRNA where it nucleates assembly of the body of the 30S subunit. With S5 and S12 plays an important role in translational accuracy. The polypeptide is Small ribosomal subunit protein uS4c (rps4) (Marchantia romanica (Liverwort)).